Reading from the N-terminus, the 559-residue chain is CCR4-NOT transcription complex subunit 6-like (559 aa).

A required for interaction with cnot1, cnot3 and cnot7 region spans residues 1–148; sequence MPKEKYDPPD…LYQEPDGTRK (148 aa). Residues 1 to 550 form a nuclease domain region; sequence MPKEKYDPPD…NGLHLPVHST (550 aa). LRR repeat units follow at residues 52 to 73, 75 to 96, 98 to 120, and 121 to 143; these read HLTALHINNNNLSRIPPEIAKL, HLVYLNLSSNKLRSLPAELGNM, TLRELLLNNNCLRVLPYELGRLF, and QLQTLGLKGNPLSQDILNLYQEP. Glu235 provides a ligand contact to Mg(2+). Substrate is bound by residues Glu235, Glu271, His353, and Pro358. Asp405 contacts Mg(2+). Asp405 functions as the Proton donor/acceptor in the catalytic mechanism. Residues Asn407, Asn474, and Phe479 each coordinate substrate.

Belongs to the CCR4/nocturin family. In terms of assembly, component of the CCR4-NOT complex. It depends on Mg(2+) as a cofactor.

The protein resides in the cytoplasm. Its subcellular location is the nucleus. It catalyses the reaction Exonucleolytic cleavage of poly(A) to 5'-AMP.. Poly(A) nuclease with 3'-5' RNase activity. Catalytic component of the CCR4-NOT complex which is one of the major cellular mRNA deadenylases and is linked to various cellular processes including bulk mRNA degradation, miRNA-mediated repression, translational repression during translational initiation and general transcription regulation. Additional complex functions may be a consequence of its influence on mRNA expression. This is CCR4-NOT transcription complex subunit 6-like (cnot6l) from Danio rerio (Zebrafish).